A 234-amino-acid polypeptide reads, in one-letter code: Proteasome subunit beta (234 aa).

The tract at residues 1–35 (MNPDLNMNPHDSGRTDPYAPELGEIATDEGDGENV) is disordered. Positions 1–39 (MNPDLNMNPHDSGRTDPYAPELGEIATDEGDGENVTKTG) are cleaved as a propeptide — removed in mature form; by autocatalysis. Thr-40 acts as the Nucleophile in catalysis.

It belongs to the peptidase T1B family. In terms of assembly, the 20S proteasome core is composed of 14 alpha and 14 beta subunits that assemble into four stacked heptameric rings, resulting in a barrel-shaped structure. The two inner rings, each composed of seven catalytic beta subunits, are sandwiched by two outer rings, each composed of seven alpha subunits. The catalytic chamber with the active sites is on the inside of the barrel. Has a gated structure, the ends of the cylinder being occluded by the N-termini of the alpha-subunits. Is capped at one or both ends by the proteasome regulatory ATPase, PAN.

Its subcellular location is the cytoplasm. The catalysed reaction is Cleavage of peptide bonds with very broad specificity.. Its activity is regulated as follows. The formation of the proteasomal ATPase PAN-20S proteasome complex, via the docking of the C-termini of PAN into the intersubunit pockets in the alpha-rings, triggers opening of the gate for substrate entry. Interconversion between the open-gate and close-gate conformations leads to a dynamic regulation of the 20S proteasome proteolysis activity. In terms of biological role, component of the proteasome core, a large protease complex with broad specificity involved in protein degradation. The polypeptide is Proteasome subunit beta (Halorhabdus utahensis (strain DSM 12940 / JCM 11049 / AX-2)).